A 394-amino-acid chain; its full sequence is Protein arginine N-methyltransferase 8 (394 aa).

Gly-2 carries the N-myristoyl glycine lipid modification. The disordered stretch occupies residues 21-40 (VESTEVSSAPPQPPQPVIPA). 2 consecutive short sequence motifs (SH3-binding) follow at residues 29–42 (APPQPPQPVIPAKP) and 53–58 (PSCPGR). Pro residues predominate over residues 30–39 (PPQPPQPVIP). Arg-58 carries the post-translational modification Omega-N-methylarginine; by PRMT8. The residue at position 73 (Arg-73) is an Asymmetric dimethylarginine; by PRMT8. Residues 73–394 (RDYYFDSYAH…TSVSNDYKMR (322 aa)) form the SAM-dependent MTase PRMT-type domain. Residues His-86, Arg-95, Gly-119, 119-122 (GSGT), Glu-141, and Glu-170 contribute to the S-adenosyl-L-methionine site. Catalysis depends on residues Glu-185 and Glu-194.

This sequence belongs to the class I-like SAM-binding methyltransferase superfamily. Protein arginine N-methyltransferase family. PRMT8 subfamily. Homodimer. Tetramer; individual homodimers associates to form a homotetramer. Homooctamer; individual homodimers associates to form a homooctamer and homooligomerization is required for proper localization to the cell membrane. Heterodimer with PRMT1; heterodimerization may recruit PRMT1 activity to the plasma membrane. Interacts with PRMT2 (via the SH3 domain). Interacts with FYN (via the SH3 domain). Interacts with EWS; independently of EWS methylation status. In terms of tissue distribution, brain-specific. Only expressed in neurons, especially in the somatosensory and limbic systems, and a part of motor system. Highly expressed in all of the regions related to general somatosensory system. Expressed in most of the relay nuclei intervening the special somatosensory system, such as the auditory, visual and vestibular systems. Also present in forebrain limbic areas and thalamic nuclei relevant to limbic areas and in areas related to the motor system, such as the caudate putamen, Purkinje cells, inferior olivary nucleus and cerebellar nuclei.

The protein localises to the cell membrane. It carries out the reaction L-arginyl-[protein] + S-adenosyl-L-methionine = N(omega)-methyl-L-arginyl-[protein] + S-adenosyl-L-homocysteine + H(+). The catalysed reaction is L-arginyl-[protein] + 2 S-adenosyl-L-methionine = N(omega),N(omega)-dimethyl-L-arginyl-[protein] + 2 S-adenosyl-L-homocysteine + 2 H(+). Functionally, S-adenosyl-L-methionine-dependent and membrane-associated arginine methyltransferase that can both catalyze the formation of omega-N monomethylarginine (MMA) and asymmetrical dimethylarginine (aDMA) in proteins such as NIFK, myelin basic protein, histone H4, H2A and H2A/H2B dimer. Able to mono- and dimethylate EWS protein; however its precise role toward EWS remains unclear as it still interacts with fully methylated EWS. The sequence is that of Protein arginine N-methyltransferase 8 from Mus musculus (Mouse).